The sequence spans 310 residues: Alpha/beta hydrolase domain-containing protein 17A (310 aa).

The segment at 38–61 is disordered; the sequence is VPEPEPGPGGAGAAPSGPLRTSAA. Catalysis depends on charge relay system residues Ser-190, Asp-255, and His-284. At Ser-307 the chain carries Phosphoserine.

It belongs to the AB hydrolase superfamily. ABHD17 family. Post-translationally, palmitoylated on cysteine residues located in a cysteine cluster at the N-terminus which promotes membrane localization. Palmitoylation is required for post-synaptic localization and for depalmitoylating activity towards DLG4/PSD95. As to expression, expressed in brain (at protein level). Expressed in hippocampal neurons.

It is found in the cell membrane. It localises to the recycling endosome membrane. The protein localises to the cell projection. Its subcellular location is the dendritic spine. The protein resides in the postsynaptic density membrane. It catalyses the reaction S-hexadecanoyl-L-cysteinyl-[protein] + H2O = L-cysteinyl-[protein] + hexadecanoate + H(+). Hydrolyzes fatty acids from S-acylated cysteine residues in proteins. Has depalmitoylating activity towards NRAS. Has depalmitoylating activity towards DLG4/PSD95. May have depalmitoylating activity towards MAP6. The chain is Alpha/beta hydrolase domain-containing protein 17A from Rattus norvegicus (Rat).